Reading from the N-terminus, the 470-residue chain is 3-oxo-isoapionate kinase (470 aa).

Positions 30 and 78 each coordinate substrate. Residues Ser-291, 403 to 406, and Gly-451 each bind ATP; that span reads GGDS.

The protein belongs to the four-carbon acid sugar kinase family.

The enzyme catalyses 3-oxoisoapionate + ATP = 3-oxoisoapionate 4-phosphate + ADP + H(+). It functions in the pathway carbohydrate metabolism. Involved in catabolism of D-apiose. Catalyzes the phosphorylation of 3-oxo-isoapionate to 3-oxo-isoapionate 4-phosphate. This Paraburkholderia graminis (strain ATCC 700544 / DSM 17151 / LMG 18924 / NCIMB 13744 / C4D1M) protein is 3-oxo-isoapionate kinase.